We begin with the raw amino-acid sequence, 773 residues long: FT-interacting protein 3 (773 aa).

The segment covering 1-16 has biased composition (basic and acidic residues); sequence MQRPPPEDFSLKETRP. Positions 1-24 are disordered; that stretch reads MQRPPPEDFSLKETRPHLGGGKLS. 3 C2 domains span residues 22–142, 181–305, and 345–471; these read KLSG…PQWY, VSGT…SRWY, and YSSD…THSY. Residues D55, D61, D108, D110, and D115 each contribute to the Ca(2+) site. 3 helical membrane-spanning segments follow: residues 574–594, 608–628, and 716–736; these read IMGV…ICNW, IILV…LFLI, and LFVL…FQVV.

The protein belongs to the MCTP family. As to quaternary structure, interacts with and regulates subcellular localization and trafficking of STM. Ca(2+) is required as a cofactor. In terms of tissue distribution, accumulates in vascular tissues, leaf primordia and flowers. Highly expressed in roots meristems and in both vegetative and inflorescence shoot apical meristems (SAMs).

The protein localises to the endoplasmic reticulum membrane. Its subcellular location is the cytoplasm. It localises to the vesicle. The protein resides in the cell membrane. It is found in the endosome membrane. The protein localises to the golgi apparatus membrane. In terms of biological role, required for proliferation and differentiation of shoot stem cells in the shoot apical meristem (SAM), thus determining the appropriate balance between the maintenance of shoot stem cells and their differentiation into other aboveground plant parts via the control of subcellular localization and intercellular trafficking of STM in the shoot apex. Prevents intracellular trafficking of STM to the plasma membrane in cells in the peripheral shoot meristem region thus facilitating STM recycling to the nucleus to maintain stem cells. May function as a signaling molecule by regulating the trafficking of other regulators. The chain is FT-interacting protein 3 from Arabidopsis thaliana (Mouse-ear cress).